We begin with the raw amino-acid sequence, 102 residues long: Monothiol glutaredoxin-S10 (102 aa).

The region spanning 1 to 101 (MDVVARLASQ…ILLKEAGALW (101 aa)) is the Glutaredoxin domain. Cys-21 is a [2Fe-2S] cluster binding site. Positions 99–102 (ALWL) match the Responsive for interaction with TGA factors motif.

This sequence belongs to the glutaredoxin family. CC-type subfamily.

Its subcellular location is the cytoplasm. It is found in the nucleus. In terms of biological role, may only reduce GSH-thiol disulfides, but not protein disulfides. This chain is Monothiol glutaredoxin-S10 (GRXS10), found in Arabidopsis thaliana (Mouse-ear cress).